A 353-amino-acid polypeptide reads, in one-letter code: ATPase GET3A (353 aa).

27-34 provides a ligand contact to ATP; that stretch reads KGGVGKTT. Aspartate 56 is an active-site residue. ATP-binding residues include glutamate 226 and asparagine 253. Residues 320–353 are a coiled coil; sequence TTSRSNVEELERKVHTLRLQLKTAEEELERVKSG.

It belongs to the arsA ATPase family. Homodimer. Interacts with GET1 and GET4.

The protein localises to the cytoplasm. The protein resides in the cytosol. It is found in the endoplasmic reticulum. It catalyses the reaction ATP + H2O = ADP + phosphate + H(+). ATPase required for the post-translational delivery of tail-anchored (TA) proteins to the endoplasmic reticulum. Recognizes and selectively binds the transmembrane domain of TA proteins in the cytosol. This complex then targets to the endoplasmic reticulum by membrane-bound receptors, where the tail-anchored protein is released for insertion. This process is regulated by ATP binding and hydrolysis. ATP binding drives the homodimer towards the closed dimer state, facilitating recognition of newly synthesized TA membrane proteins. ATP hydrolysis is required for insertion. Subsequently, the homodimer reverts towards the open dimer state, lowering its affinity for the membrane-bound receptor, and returning it to the cytosol to initiate a new round of targeting. Involved in the control of root hair growth through the regulation of syntaxin SYP123 expression. The chain is ATPase GET3A from Arabidopsis thaliana (Mouse-ear cress).